A 411-amino-acid chain; its full sequence is MAEYLILYLNNKGKLTNHERYEISEHDGVISNIDIDEDDKLDTLLTEIKNKNVLSTKETGSDFVGHIVIENGNRPVRGVNIEEYKIRASTDEEFDIPYNIYKPENYSLLKKLRKLLGKPDPPPLVNMLKQDRILTGWKKKIFKSYKPSYKQFITSKCTIHTTGYLYNIGDLDLFTRDILRVVVDDDIFNHWLLTEGIIDKMDFVCHYLKCVLEEGGFMCDHCGDKFIIIKNQKSKELFDKITAKMNHVNYVRELSTDLPLTKYNISKSLTITKCPYSCSYLFNNGVELSQKLKTMIMDMINLQTPDSLLERLGEVLTVSGTDGRERNEILSAIWKGLYEGEPFLPCMIGMKDYQDISIKDMRIPVFLKPSPYSTRVVVEPKVCFLPWQIVFQMMFSQDVLEYSSMLYFADS.

This is an uncharacterized protein from Magallana gigas (Pacific oyster).